A 494-amino-acid polypeptide reads, in one-letter code: Gabija protein GajB (494 aa).

Residues 1–229 (MSREQIIKDG…YHLTSNFRCC (229 aa)) enclose the UvrD-like helicase ATP-binding domain. 17 to 24 (AGAGSGKT) contacts ATP.

This sequence belongs to the helicase family. Homodimer. Interacts with GajA; 2 GajB dimers dock at opposite sides of the GajA complex to form a 4:4 GajA-GajB assembly (GajAB). GajAB interacts with Bacillus phage Phi3T Gad1 protein; this interaction forms a 4:4:8 GajAB-Gad1 complex and leads to GajAB inhibition.

Its function is as follows. Component of antiviral defense system Gabija type I, composed of GajA and GajB. Expression of Gabija type I in B.subtilis (strain BEST7003) confers resistance to phages phi105, phi29, rho14, SpBeta and SBSphiC. Expression of Gabija type I in E.coli B (strain ATCC 11303) confers resistance to phage T7. May be a helicase or contribute to GajA activation. The sequence is that of Gabija protein GajB from Bacillus cereus (strain VD045).